The primary structure comprises 48 residues: Small, acid-soluble spore protein O (48 aa).

The tract at residues 1-23 (MVKRKANHVINGMNDAKSQGKGA) is disordered.

The protein belongs to the SspO family.

Its subcellular location is the spore core. The polypeptide is Small, acid-soluble spore protein O (Bacillus velezensis (strain DSM 23117 / BGSC 10A6 / LMG 26770 / FZB42) (Bacillus amyloliquefaciens subsp. plantarum)).